A 307-amino-acid chain; its full sequence is Elongation factor Ts (307 aa).

Residues Thr80–Val83 form an involved in Mg(2+) ion dislocation from EF-Tu region.

It belongs to the EF-Ts family.

The protein localises to the cytoplasm. Associates with the EF-Tu.GDP complex and induces the exchange of GDP to GTP. It remains bound to the aminoacyl-tRNA.EF-Tu.GTP complex up to the GTP hydrolysis stage on the ribosome. The sequence is that of Elongation factor Ts from Rhodopseudomonas palustris (strain BisA53).